The chain runs to 158 residues: RNA pyrophosphohydrolase (158 aa).

A Nudix hydrolase domain is found at 8 to 152 (PYRPCAGVML…KRALYRGLIE (145 aa)). Positions 42–63 (GGIDEGEDAEKAAIRELGEETG) match the Nudix box motif.

Belongs to the Nudix hydrolase family. RppH subfamily. A divalent metal cation serves as cofactor.

Accelerates the degradation of transcripts by removing pyrophosphate from the 5'-end of triphosphorylated RNA, leading to a more labile monophosphorylated state that can stimulate subsequent ribonuclease cleavage. The chain is RNA pyrophosphohydrolase from Sphingopyxis alaskensis (strain DSM 13593 / LMG 18877 / RB2256) (Sphingomonas alaskensis).